The following is a 292-amino-acid chain: ATP synthase gamma chain (292 aa).

This sequence belongs to the ATPase gamma chain family. As to quaternary structure, F-type ATPases have 2 components, CF(1) - the catalytic core - and CF(0) - the membrane proton channel. CF(1) has five subunits: alpha(3), beta(3), gamma(1), delta(1), epsilon(1). CF(0) has three main subunits: a, b and c.

It is found in the cell inner membrane. Its function is as follows. Produces ATP from ADP in the presence of a proton gradient across the membrane. The gamma chain is believed to be important in regulating ATPase activity and the flow of protons through the CF(0) complex. The sequence is that of ATP synthase gamma chain from Methylobacterium sp. (strain 4-46).